The primary structure comprises 380 residues: Succinate--CoA ligase [ADP-forming] subunit beta (380 aa).

Residues 9–236 (KGVFADAGIP…EAAGDELEAK (228 aa)) enclose the ATP-grasp domain. ATP contacts are provided by residues Lys-45, 52 to 54 (GRG), Glu-91, Val-94, and Glu-99. Residues Asn-191 and Asp-205 each coordinate Mg(2+). Substrate contacts are provided by residues Asn-256 and 313–315 (GIT).

Belongs to the succinate/malate CoA ligase beta subunit family. In terms of assembly, heterotetramer of two alpha and two beta subunits. Requires Mg(2+) as cofactor.

The catalysed reaction is succinate + ATP + CoA = succinyl-CoA + ADP + phosphate. The enzyme catalyses GTP + succinate + CoA = succinyl-CoA + GDP + phosphate. It functions in the pathway carbohydrate metabolism; tricarboxylic acid cycle; succinate from succinyl-CoA (ligase route): step 1/1. Succinyl-CoA synthetase functions in the citric acid cycle (TCA), coupling the hydrolysis of succinyl-CoA to the synthesis of either ATP or GTP and thus represents the only step of substrate-level phosphorylation in the TCA. The beta subunit provides nucleotide specificity of the enzyme and binds the substrate succinate, while the binding sites for coenzyme A and phosphate are found in the alpha subunit. The protein is Succinate--CoA ligase [ADP-forming] subunit beta of Natronomonas pharaonis (strain ATCC 35678 / DSM 2160 / CIP 103997 / JCM 8858 / NBRC 14720 / NCIMB 2260 / Gabara) (Halobacterium pharaonis).